A 148-amino-acid polypeptide reads, in one-letter code: HTH-type transcriptional regulator SarZ (148 aa).

One can recognise an HTH marR-type domain in the interval 9 to 139 (SKQLCFLFYV…LVEDLQNFVT (131 aa)). A DNA-binding region (H-T-H motif) is located at residues 55 to 78 (IKKLGERVFLDSGTLTPLLKKLEK).

The protein belongs to the SarZ family.

The protein localises to the cytoplasm. This Staphylococcus epidermidis (strain ATCC 35984 / DSM 28319 / BCRC 17069 / CCUG 31568 / BM 3577 / RP62A) protein is HTH-type transcriptional regulator SarZ (sarZ).